Reading from the N-terminus, the 719-residue chain is Calpain-12 (719 aa).

The 297-residue stretch at 45–341 folds into the Calpain catalytic domain; that stretch reads LFRDPYFPAG…FDTVQICSLS (297 aa). Active-site residues include cysteine 105, histidine 259, and asparagine 283. Positions 342–540 are domain III; the sequence is PEVLGPSPEG…DDVISADLQS (199 aa). The segment covering 393 to 402 has biased composition (acidic residues); it reads DEEDDEDEEG. The tract at residues 393–418 is disordered; that stretch reads DEEDDEDEEGPWGGWGAAGARGPARG. Residues 541–719 form a domain IV region; the sequence is LQGPYLPLEL…RQWMEVATFS (179 aa). The EF-hand domain maps to 620 to 655; that stretch reads GYLLEWQAIFNKFDEDTSGTMNSYELRLALNAAGFH. Ca(2+) is bound by residues aspartate 633, aspartate 635, serine 637, threonine 639, and glutamate 644.

This sequence belongs to the peptidase C2 family.

Calcium-regulated non-lysosomal thiol-protease. The polypeptide is Calpain-12 (CAPN12) (Homo sapiens (Human)).